A 111-amino-acid polypeptide reads, in one-letter code: Large ribosomal subunit protein eL31 (111 aa).

Belongs to the eukaryotic ribosomal protein eL31 family.

The sequence is that of Large ribosomal subunit protein eL31 (rpl31) from Dictyostelium discoideum (Social amoeba).